A 196-amino-acid chain; its full sequence is ATP-dependent Clp protease proteolytic subunit (196 aa).

The active-site Nucleophile is the serine 101. The active site involves histidine 126.

The protein belongs to the peptidase S14 family. In terms of assembly, component of the chloroplastic Clp protease core complex.

It is found in the plastid. It localises to the chloroplast stroma. The enzyme catalyses Hydrolysis of proteins to small peptides in the presence of ATP and magnesium. alpha-casein is the usual test substrate. In the absence of ATP, only oligopeptides shorter than five residues are hydrolyzed (such as succinyl-Leu-Tyr-|-NHMec, and Leu-Tyr-Leu-|-Tyr-Trp, in which cleavage of the -Tyr-|-Leu- and -Tyr-|-Trp bonds also occurs).. Functionally, cleaves peptides in various proteins in a process that requires ATP hydrolysis. Has a chymotrypsin-like activity. Plays a major role in the degradation of misfolded proteins. In Aethionema cordifolium (Lebanon stonecress), this protein is ATP-dependent Clp protease proteolytic subunit.